A 99-amino-acid chain; its full sequence is MNPIIEYLTGMNVLTDQIIAMDLLISAKNGVRNYAMAATEAGTPEVKEVLIRHLEEALDMHEQLSSYMMEKGWYHPWNPDEQVKLNLKNIDTAIQLPTL.

It belongs to the CotF family.

The protein localises to the spore coat. This Bacillus subtilis (strain 168) protein is Spore coat protein F-like protein YraD (yraD).